The chain runs to 89 residues: Class II hydrophobin 2 (89 aa).

The first 15 residues, 1 to 15, serve as a signal peptide directing secretion; the sequence is MKLYIAAALLTLGLA. Intrachain disulfides connect Cys34–Cys74, Cys45–Cys66, Cys46–Cys58, and Cys75–Cys86.

Belongs to the cerato-ulmin hydrophobin family. As to quaternary structure, homodimer. Homodimers further self-assemble to form highly ordered films at water-air interfaces through intermolecular interactions.

It is found in the secreted. It localises to the cell wall. Aerial growth, conidiation, and dispersal of filamentous fungi in the environment rely upon a capability of their secreting small amphipathic proteins called hydrophobins (HPBs) with low sequence identity. Class I can self-assemble into an outermost layer of rodlet bundles on aerial cell surfaces, conferring cellular hydrophobicity that supports fungal growth, development and dispersal; whereas Class II form highly ordered films at water-air interfaces through intermolecular interactions but contribute nothing to the rodlet structure. The polypeptide is Class II hydrophobin 2 (Trichoderma asperellum (strain ATCC 204424 / CBS 433.97 / NBRC 101777)).